The following is a 283-amino-acid chain: Coiled-coil domain-containing protein 107 (283 aa).

A signal peptide spans 1–24; it reads MAGAVSLLGVVGLLLVSALSGVLG. The tract at residues 30–62 is disordered; it reads DLRAHPGNAAHPGSGATEPRRRPPLKDQRERTR. Over residues 47-62 the composition is skewed to basic and acidic residues; the sequence is EPRRRPPLKDQRERTR. A helical membrane pass occupies residues 65 to 85; it reads SLPLGALYTAAVAAFVLYKCL. Residues 104–134 adopt a coiled-coil conformation; it reads LQSEQQLAQLTQQLAQTEQHLNNLMAQLDPL. 2 disordered regions span residues 164–207 and 258–283; these read KPDK…SRPL and AKGP…SLFS. Over residues 176-187 the composition is skewed to gly residues; it reads EGSGGESAGGGD.

The protein localises to the membrane. The polypeptide is Coiled-coil domain-containing protein 107 (CCDC107) (Homo sapiens (Human)).